Reading from the N-terminus, the 390-residue chain is Calcium-binding and spermatid-specific protein 1 (390 aa).

3 disordered regions span residues 1-23 (MAED…TPTE), 82-109 (ASLK…KESI), and 146-225 (TIDA…TIPD). The segment covering 162-174 (ETQEDSSANDEDT) has biased composition (acidic residues). Low complexity predominate over residues 184 to 193 (TDVSSSTSSD). A phosphoserine mark is found at Ser251 and Ser267. Phosphothreonine; by CK2 is present on Thr280. At Ser312 the chain carries Phosphoserine. Residues 330–344 (EPHVDTKNSPEKDAA) show a composition bias toward basic and acidic residues. The segment at 330–390 (EPHVDTKNSP…LKEEPDELMM (61 aa)) is disordered. Ser346, Ser356, Ser371, and Ser375 each carry phosphoserine. A compositionally biased stretch (polar residues) spans 346–364 (SVTNVTEEFPSVTSVVEQS).

Expressed in seminiferous tubules of the testis in step 10 spermatids (stage X), subsequently increasing to reach maximal levels of step 18 elongated spermatids (stage VI) (at protein level). Strongly expressed in testis. Weakly expressed in olfactory epithelium. Expressed in spermatids of seminiferous tubules at steps 4-14 (stages IV to XIV of the seminiferous epithelium classification).

The protein resides in the cytoplasm. It is found in the mitochondrion inner membrane. Its subcellular location is the cell projection. The protein localises to the cilium. It localises to the flagellum. The protein resides in the cytoplasmic vesicle. It is found in the secretory vesicle. Its subcellular location is the acrosome. Functionally, calcium-binding protein. Essential for maintaining the structural integrity of the sperm flagella. The polypeptide is Calcium-binding and spermatid-specific protein 1 (Cabs1) (Rattus norvegicus (Rat)).